The chain runs to 30 residues: Photosystem I reaction center subunit XII (30 aa).

A helical transmembrane segment spans residues 7–29 (VYIALMAALLASVLAIRLGATLY).

It belongs to the PsaM family.

The protein localises to the plastid. Its subcellular location is the chloroplast thylakoid membrane. In Thalassiosira pseudonana (Marine diatom), this protein is Photosystem I reaction center subunit XII.